Here is a 686-residue protein sequence, read N- to C-terminus: MTDALLPAAPQPLEKESDGYFRKGCNPLAQTGRSKLQNQRAALNQQILKAVRMRTGAENLLKVATNHKVREQVRLELSFVNSDLQMLKEELEGLNISVGVYQSTEEAFTVPLIPLGLKETKDIDFSVVLKDFILEHYSEDSYLYEDEIADLMDLRQACRTPSRDEAGVELLMSYFIQLGFVESRFFPPTRQMGILFTWYDSLTGVPVSQQNLLLEKASILFNIGALYTQIGTRCNRRTQAGLDGAVDAFQRAAGVLHHLKETFTHTPSYDMSPAMLSVLVKMMLAQAQENVFEKICLPGIRNEFFVLVKVAQEAAKVGEVYRQLHTAMSQAPVKENIPYSWASLVCVKAHHYAALAHYFAATLLIDHQLKPGADEDHQEKCLSQLYDHMPEGLTPLATLKSGHQRRQLGKSHLRRAVAHHEESVREASLCKKLRNIEVLQDVLSVAHERSRLKYAQHQDDDDLLNLIDAPDIISKTEQEVEIILPQFSKVTATDFFQKLGPLSVFSANKRWTPPRSIHFTAEEGDLGFTLRGNSPVQVHFLDPHCSAALAGAKEGDYIVSIQDVDCKWLTVSEVMKLLKACGRDGVEMKVVSLLDFTSSMHNKCATYSVGMQKTYSMICLAIDDDDKTDKTKKISKKLSFLSWGTDKNRVKSASTLCLPSVGVARPQVKKKLPSPFSLLNSDSSLY.

In terms of domain architecture, REM-1 spans 26–100; it reads NPLAQTGRSK…LEGLNISVGV (75 aa). The interaction with Rho stretch occupies residues 46–66; that stretch reads QILKAVRMRTGAENLLKVATN. Positions 111 to 460 constitute a BRO1 domain; sequence PLIPLGLKET…RLKYAQHQDD (350 aa). The 79-residue stretch at 515–593 folds into the PDZ domain; that stretch reads RSIHFTAEEG…DGVEMKVVSL (79 aa). The residue at position 655 (Thr-655) is a Phosphothreonine.

It belongs to the RHPN family. As to quaternary structure, interacts with GTP-bound RhoA and RhoB. Interacts with both GTP- and GDP-bound RhoA. Interacts with KRT18. In terms of tissue distribution, mainly expressed in thyroid.

It localises to the cytoplasm. The protein localises to the perinuclear region. In terms of biological role, binds specifically to GTP-Rho. May function in a Rho pathway to limit stress fiber formation and/or increase the turnover of F-actin structures in the absence of high levels of RhoA activity. The sequence is that of Rhophilin-2 (RHPN2) from Canis lupus familiaris (Dog).